The primary structure comprises 780 residues: Molybdenum cofactor sulfurase (780 aa).

N6-(pyridoxal phosphate)lysine is present on Lys246. The active site involves Cys413. In terms of domain architecture, MOSC spans 635-780; the sequence is LRLLRQSGQR…MTCGDVVLVE (146 aa). Ser734 is modified (phosphoserine).

Belongs to the class-V pyridoxal-phosphate-dependent aminotransferase family. MOCOS subfamily. Pyridoxal 5'-phosphate serves as cofactor.

It catalyses the reaction Mo-molybdopterin + L-cysteine + AH2 = thio-Mo-molybdopterin + L-alanine + A + H2O. Functionally, sulfurates the molybdenum cofactor. Sulfation of molybdenum is essential for xanthine dehydrogenase (XDH) and aldehyde oxidase (ADO) enzymes in which molybdenum cofactor is liganded by 1 oxygen and 1 sulfur atom in active form. The sequence is that of Molybdenum cofactor sulfurase from Drosophila yakuba (Fruit fly).